An 865-amino-acid polypeptide reads, in one-letter code: Rifampicin phosphotransferase (865 aa).

The tract at residues Ser2–Thr314 is ATP-binding. 8 residues coordinate ATP: Lys23, Arg117, Gly132, Thr136, Gln183, Glu297, Gln309, and Arg311. The rifampicin-binding stretch occupies residues Phe327–Ala752. Residues Glu403 to Ala430 are disordered. Residues Pro409–Gly424 show a composition bias toward low complexity. Residues Gly765 to Leu863 form a swivel phosphohistidine region. The active-site Tele-phosphohistidine intermediate is His823.

Belongs to the rifampicin phosphotransferase family.

It catalyses the reaction rifampicin + ATP + H2O = 21-phosphorifampicin + AMP + phosphate + 2 H(+). In terms of biological role, catalyzes the phosphorylation of rifampicin, also known as rifampin (RIF), leading to its inactivation. Confers high level resistance to a variety of clinically used rifamycin antibiotics. The sequence is that of Rifampicin phosphotransferase from Streptomyces sp.